A 157-amino-acid chain; its full sequence is Protein Smg (157 aa).

This sequence belongs to the Smg family.

This chain is Protein Smg, found in Escherichia coli O8 (strain IAI1).